A 362-amino-acid polypeptide reads, in one-letter code: Histidinol-phosphate aminotransferase (362 aa).

Residue Lys-220 is modified to N6-(pyridoxal phosphate)lysine.

It belongs to the class-II pyridoxal-phosphate-dependent aminotransferase family. Histidinol-phosphate aminotransferase subfamily. Homodimer. It depends on pyridoxal 5'-phosphate as a cofactor.

It catalyses the reaction L-histidinol phosphate + 2-oxoglutarate = 3-(imidazol-4-yl)-2-oxopropyl phosphate + L-glutamate. It functions in the pathway amino-acid biosynthesis; L-histidine biosynthesis; L-histidine from 5-phospho-alpha-D-ribose 1-diphosphate: step 7/9. The polypeptide is Histidinol-phosphate aminotransferase (Rhodospirillum centenum (strain ATCC 51521 / SW)).